The chain runs to 548 residues: Glucose-6-phosphate isomerase (548 aa).

The active-site Proton donor is glutamate 355. Catalysis depends on residues histidine 386 and lysine 514.

This sequence belongs to the GPI family.

The protein resides in the cytoplasm. The enzyme catalyses alpha-D-glucose 6-phosphate = beta-D-fructose 6-phosphate. It functions in the pathway carbohydrate biosynthesis; gluconeogenesis. Its pathway is carbohydrate degradation; glycolysis; D-glyceraldehyde 3-phosphate and glycerone phosphate from D-glucose: step 2/4. Its function is as follows. Catalyzes the reversible isomerization of glucose-6-phosphate to fructose-6-phosphate. The polypeptide is Glucose-6-phosphate isomerase (Yersinia pestis (strain Pestoides F)).